We begin with the raw amino-acid sequence, 223 residues long: Thymidine kinase (223 aa).

Residues 19–26 (GPMFAGKT) and 96–99 (DEVQ) each bind ATP. Residue glutamate 97 is the Proton acceptor of the active site. 4 residues coordinate Zn(2+): cysteine 153, cysteine 156, cysteine 191, and histidine 194.

This sequence belongs to the thymidine kinase family. Homotetramer.

It is found in the cytoplasm. It catalyses the reaction thymidine + ATP = dTMP + ADP + H(+). In Ureaplasma urealyticum serovar 10 (strain ATCC 33699 / Western), this protein is Thymidine kinase.